Consider the following 1670-residue polypeptide: DNA-directed RNA polymerase I subunit 1 (1670 aa).

Residues C79, C82, C89, H92, C119, and C122 each coordinate Zn(2+). The interval 154–185 is disordered; that stretch reads ESNTPTKSKSSDESCESVVTTDSSEECEDSDV. The span at 176–185 shows a compositional bias: acidic residues; the sequence is SSEECEDSDV. Positions 213 and 216 each coordinate Zn(2+). The tract at residues 255-293 is disordered; it reads TSSVENPDGFDDSGIDALSEVEDGDKETREKSTEVAAEF. Residues 262–279 are compositionally biased toward acidic residues; that stretch reads DGFDDSGIDALSEVEDGD. Over residues 280-293 the composition is skewed to basic and acidic residues; the sequence is KETREKSTEVAAEF. D602, D604, and D606 together coordinate Mg(2+). The bridging helix stretch occupies residues 1005–1017; the sequence is PQEYYFHCMAGRE. The interval 1318 to 1437 is disordered; sequence TGPIAGNETD…EQSKKKRRKF (120 aa). 3 stretches are compositionally biased toward acidic residues: residues 1339-1354, 1366-1379, and 1388-1399; these read DDGD…DDLG, DEMD…DETN, and EDPEMDSENEDT. Residues 1415–1429 are compositionally biased toward basic and acidic residues; the sequence is EPQKEVKGVKNVKEQ.

Belongs to the RNA polymerase beta' chain family. In terms of assembly, component of the RNA polymerase I (Pol I) complex consisting of at least 13 subunits.

The protein resides in the nucleus. The catalysed reaction is RNA(n) + a ribonucleoside 5'-triphosphate = RNA(n+1) + diphosphate. DNA-dependent RNA polymerase catalyzes the transcription of DNA into RNA using the four ribonucleoside triphosphates as substrates. Largest and catalytic core component of RNA polymerase I which synthesizes ribosomal RNA precursors. Forms the polymerase active center together with the second largest subunit. A single stranded DNA template strand of the promoter is positioned within the central active site cleft of Pol I. A bridging helix emanates from NRPA1 and crosses the cleft near the catalytic site and is thought to promote translocation of Pol I by acting as a ratchet that moves the RNA-DNA hybrid through the active site by switching from straight to bent conformations at each step of nucleotide addition. In Arabidopsis thaliana (Mouse-ear cress), this protein is DNA-directed RNA polymerase I subunit 1.